The sequence spans 369 residues: Queuine tRNA-ribosyltransferase (369 aa).

The active-site Proton acceptor is aspartate 90. Substrate-binding positions include 90-94, aspartate 144, glutamine 186, and glycine 213; that span reads DSGGF. The segment at 244 to 250 is RNA binding; sequence GVGKPAD. Aspartate 263 functions as the Nucleophile in the catalytic mechanism. Zn(2+) contacts are provided by cysteine 301, cysteine 303, cysteine 306, and histidine 332.

The protein belongs to the queuine tRNA-ribosyltransferase family. Homodimer. Within each dimer, one monomer is responsible for RNA recognition and catalysis, while the other monomer binds to the replacement base PreQ1. Zn(2+) serves as cofactor.

It catalyses the reaction 7-aminomethyl-7-carbaguanine + guanosine(34) in tRNA = 7-aminomethyl-7-carbaguanosine(34) in tRNA + guanine. The protein operates within tRNA modification; tRNA-queuosine biosynthesis. Functionally, catalyzes the base-exchange of a guanine (G) residue with the queuine precursor 7-aminomethyl-7-deazaguanine (PreQ1) at position 34 (anticodon wobble position) in tRNAs with GU(N) anticodons (tRNA-Asp, -Asn, -His and -Tyr). Catalysis occurs through a double-displacement mechanism. The nucleophile active site attacks the C1' of nucleotide 34 to detach the guanine base from the RNA, forming a covalent enzyme-RNA intermediate. The proton acceptor active site deprotonates the incoming PreQ1, allowing a nucleophilic attack on the C1' of the ribose to form the product. After dissociation, two additional enzymatic reactions on the tRNA convert PreQ1 to queuine (Q), resulting in the hypermodified nucleoside queuosine (7-(((4,5-cis-dihydroxy-2-cyclopenten-1-yl)amino)methyl)-7-deazaguanosine). The sequence is that of Queuine tRNA-ribosyltransferase from Dichelobacter nodosus (strain VCS1703A).